The chain runs to 435 residues: Gamma-glutamyl phosphate reductase (435 aa).

This sequence belongs to the gamma-glutamyl phosphate reductase family.

The protein localises to the cytoplasm. The catalysed reaction is L-glutamate 5-semialdehyde + phosphate + NADP(+) = L-glutamyl 5-phosphate + NADPH + H(+). Its pathway is amino-acid biosynthesis; L-proline biosynthesis; L-glutamate 5-semialdehyde from L-glutamate: step 2/2. In terms of biological role, catalyzes the NADPH-dependent reduction of L-glutamate 5-phosphate into L-glutamate 5-semialdehyde and phosphate. The product spontaneously undergoes cyclization to form 1-pyrroline-5-carboxylate. This chain is Gamma-glutamyl phosphate reductase, found in Bradyrhizobium diazoefficiens (strain JCM 10833 / BCRC 13528 / IAM 13628 / NBRC 14792 / USDA 110).